We begin with the raw amino-acid sequence, 212 residues long: Large ribosomal subunit protein uL3 (212 aa).

The tract at residues 119-147 is disordered; it reads YQGNIKRWGQSRGPETHGSRYHRIPGSMG.

The protein belongs to the universal ribosomal protein uL3 family. Part of the 50S ribosomal subunit. Forms a cluster with proteins L14 and L19.

In terms of biological role, one of the primary rRNA binding proteins, it binds directly near the 3'-end of the 23S rRNA, where it nucleates assembly of the 50S subunit. The sequence is that of Large ribosomal subunit protein uL3 from Lactobacillus acidophilus (strain ATCC 700396 / NCK56 / N2 / NCFM).